The sequence spans 474 residues: Aspartyl/glutamyl-tRNA(Asn/Gln) amidotransferase subunit B (474 aa).

This sequence belongs to the GatB/GatE family. GatB subfamily. In terms of assembly, heterotrimer of A, B and C subunits.

The enzyme catalyses L-glutamyl-tRNA(Gln) + L-glutamine + ATP + H2O = L-glutaminyl-tRNA(Gln) + L-glutamate + ADP + phosphate + H(+). It catalyses the reaction L-aspartyl-tRNA(Asn) + L-glutamine + ATP + H2O = L-asparaginyl-tRNA(Asn) + L-glutamate + ADP + phosphate + 2 H(+). Its function is as follows. Allows the formation of correctly charged Asn-tRNA(Asn) or Gln-tRNA(Gln) through the transamidation of misacylated Asp-tRNA(Asn) or Glu-tRNA(Gln) in organisms which lack either or both of asparaginyl-tRNA or glutaminyl-tRNA synthetases. The reaction takes place in the presence of glutamine and ATP through an activated phospho-Asp-tRNA(Asn) or phospho-Glu-tRNA(Gln). The sequence is that of Aspartyl/glutamyl-tRNA(Asn/Gln) amidotransferase subunit B from Methanospirillum hungatei JF-1 (strain ATCC 27890 / DSM 864 / NBRC 100397 / JF-1).